The primary structure comprises 165 residues: Protein NKG7 (165 aa).

4 consecutive transmembrane segments (helical) span residues 9 to 29 (LLTS…NFWF), 61 to 81 (FCIL…MSCI), 92 to 112 (IVST…MTVY), and 133 to 153 (FYLG…SLGA).

Belongs to the PMP-22/EMP/MP20 family.

It localises to the cell membrane. Its subcellular location is the cytolytic granule membrane. Functionally, regulates cytotoxic granule exocytosis in effector lymphocytes, thus acting as a critical mediator of inflammation in a broad range of infectious and non-infectious diseases. Essential for cytotoxic degranulation of natural killer (NK) cells and CD8(+) T-cells and for the activation of CD4(+) T-cells following infection. Plays a critical role in CD8(+) T-cell and NK cell-mediated cytolysis of target cells and contributes to the cytolytic activity via the perforin/granzyme pathway by enhancing exocytosis of LAMP1-carrying lytic granules. Contributes to NK cell-mediated control of cancer metastasis. The polypeptide is Protein NKG7 (NKG7) (Bos taurus (Bovine)).